Reading from the N-terminus, the 301-residue chain is Indole-3-glycerol phosphate synthase (301 aa).

This sequence belongs to the TrpC family.

The catalysed reaction is 1-(2-carboxyphenylamino)-1-deoxy-D-ribulose 5-phosphate + H(+) = (1S,2R)-1-C-(indol-3-yl)glycerol 3-phosphate + CO2 + H2O. Its pathway is amino-acid biosynthesis; L-tryptophan biosynthesis; L-tryptophan from chorismate: step 4/5. The polypeptide is Indole-3-glycerol phosphate synthase (Prochlorococcus marinus (strain MIT 9313)).